A 409-amino-acid polypeptide reads, in one-letter code: TM2 domain-containing protein ZK858.5 (409 aa).

Residues 8 to 55 (VKPWIVRIILIVGGLFGAHRLYLKQVPEAFVFFSTLGVLLIGWLYDSF) form the TM2 domain. A run of 6 helical transmembrane segments spans residues 10–30 (PWIVRIILIVGGLFGAHRLYL), 37–57 (FVFFSTLGVLLIGWLYDSFMF), 104–124 (VLYGSYIGLATWLACTVTFGW), 127–147 (INLIPFICVVALGITAGIYII), 168–190 (MFIMVRLAQTTVFRAIFLTAIVS), and 209–229 (HFLFWSSLFLMLVCVILLGCS).

This sequence belongs to the TM2 family.

The protein localises to the membrane. This Caenorhabditis elegans protein is TM2 domain-containing protein ZK858.5.